We begin with the raw amino-acid sequence, 261 residues long: MAVNHVRSKSSNGKRLVQSKLNINNETILKCPKCEMKYSPNSIDDVATHKKYHDLHINGRNWSQTWGIPIHDTTSSTIIATPSSSPFKTGKSVNNKNNERIVMIQENKPAEVKAMLEIMDIVNQELNAPQDENNFWRKPNAEHQGKAIVYIKDKKVVGAITVEVLKQHKCRWMIYETRTLVEHVRPQFTLGISRIWVCRAQRGKGIAEKLLDAARISAIPGQNVDKMKLAWSQPSDSGGKLAKKYNGVKHKSGHILIPCYL.

The segment at 29-53 (LKCPKCEMKYSPNSIDDVATHKKYH) adopts a CCHH-type zinc-finger fold. Residues 102-261 (VMIQENKPAE…SGHILIPCYL (160 aa)) form the N-acetyltransferase domain.

The protein belongs to the acetyltransferase family. ECO subfamily.

Its subcellular location is the nucleus. Functionally, probable acetyltransferase required for the establishment of sister chromatid cohesion and couple the processes of cohesion and DNA replication to ensure that only sister chromatids become paired together. In contrast to the structural cohesins, the deposition and establishment factors are required only during S phase. Acts by acetylating the cohesin complex component SMC3. This is N-acetyltransferase ECO1 (ECO1) from Candida glabrata (strain ATCC 2001 / BCRC 20586 / JCM 3761 / NBRC 0622 / NRRL Y-65 / CBS 138) (Yeast).